Reading from the N-terminus, the 646-residue chain is Ribonuclease Y (646 aa).

Residues 4–24 traverse the membrane as a helical segment; it reads VLVVLLSLVLVVLSVLILAVA. 2 disordered regions span residues 43 to 62 and 69 to 118; these read PRTP…DFDE and LPAP…HGGS. The 67-residue stretch at 336-402 folds into the KH domain; the sequence is VVTVLHLPGD…RITLAALVSD (67 aa). One can recognise an HD domain in the interval 462 to 555; it reads VLAHLIESAH…TQAADQISGG (94 aa).

The protein belongs to the RNase Y family.

It localises to the cell membrane. Endoribonuclease that initiates mRNA decay. This Frankia casuarinae (strain DSM 45818 / CECT 9043 / HFP020203 / CcI3) protein is Ribonuclease Y.